The chain runs to 342 residues: Phosphate acyltransferase (342 aa).

Belongs to the PlsX family. Homodimer. Probably interacts with PlsY.

Its subcellular location is the cytoplasm. The catalysed reaction is a fatty acyl-[ACP] + phosphate = an acyl phosphate + holo-[ACP]. It participates in lipid metabolism; phospholipid metabolism. Functionally, catalyzes the reversible formation of acyl-phosphate (acyl-PO(4)) from acyl-[acyl-carrier-protein] (acyl-ACP). This enzyme utilizes acyl-ACP as fatty acyl donor, but not acyl-CoA. This chain is Phosphate acyltransferase, found in Shewanella sp. (strain ANA-3).